The chain runs to 578 residues: Arginine--tRNA ligase (578 aa).

The 'HIGH' region motif lies at Pro127–His137.

Belongs to the class-I aminoacyl-tRNA synthetase family. Monomer.

It localises to the cytoplasm. It catalyses the reaction tRNA(Arg) + L-arginine + ATP = L-arginyl-tRNA(Arg) + AMP + diphosphate. In Pseudomonas fluorescens (strain ATCC BAA-477 / NRRL B-23932 / Pf-5), this protein is Arginine--tRNA ligase.